The chain runs to 332 residues: Alpha/beta hydrolase domain-containing protein aho-3 (332 aa).

Residues 1-15 (MSSGAPSGSSMSSTP) are compositionally biased toward low complexity. The interval 1–24 (MSSGAPSGSSMSSTPGSPPPRAGG) is disordered. Catalysis depends on charge relay system residues Ser-191, Asp-256, and His-285.

This sequence belongs to the AB hydrolase superfamily. ABHD17 family. Palmitoylated on cysteine residues located in a cysteine cluster at the N-terminus which promotes membrane localization and localization to sensory neuron endings. Expressed in a subset of neurons including AIY, HSN, ADF, AFD, AWC, AWB and NSM, hypodermis, pharyngeal muscle and intestine.

It localises to the cell membrane. It is found in the cytoplasmic vesicle membrane. It carries out the reaction S-hexadecanoyl-L-cysteinyl-[protein] + H2O = L-cysteinyl-[protein] + hexadecanoate + H(+). Its function is as follows. Hydrolyzes fatty acids from S-acylated cysteine residues in proteins. Acts in sensory neurons including AWC to regulate starvation-induced thermotaxis plasticity and salt learning behavior. The protein is Alpha/beta hydrolase domain-containing protein aho-3 of Caenorhabditis elegans.